The chain runs to 975 residues: Importin-11 (975 aa).

Met1 is modified (N-acetylmethionine). Positions 28–100 (AEEQLKQWET…RAGLITNFNE (73 aa)) constitute an Importin N-terminal domain. HEAT repeat units lie at residues 123-160 (RQWP…TLAS), 209-248 (ERTL…RLKQ), 318-356 (VQCM…KMAF), 422-459 (QTLT…AVGL), 473-509 (WFKN…VKFK), 511-548 (DLRP…DFEF), 555-593 (PYLE…RVNM), 600-636 (GCLV…GLGA), 640-677 (NLYP…TLEN), 683-720 (PELL…SSTE), 743-764 (EGQV…ILGP), 765-804 (QMFQ…QNTS), 819-849 (QEMD…KLSA), 850-887 (LALL…EDPE), and 957-974 (METV…FLQG). Ser343 bears the Phosphoserine mark.

This sequence belongs to the importin beta family. In terms of assembly, interacts with UBE2E3 and RPL12.

It localises to the cytoplasm. The protein resides in the nucleus. Functionally, functions in nuclear protein import as nuclear transport receptor. Serves as receptor for nuclear localization signals (NLS) in cargo substrates. Is thought to mediate docking of the importin/substrate complex to the nuclear pore complex (NPC) through binding to nucleoporin and the complex is subsequently translocated through the pore by an energy requiring, Ran-dependent mechanism. At the nucleoplasmic side of the NPC, Ran binds to the importin, the importin/substrate complex dissociates and importin is re-exported from the nucleus to the cytoplasm where GTP hydrolysis releases Ran. The directionality of nuclear import is thought to be conferred by an asymmetric distribution of the GTP- and GDP-bound forms of Ran between the cytoplasm and nucleus. Mediates the nuclear import of UBE2E3, and of RPL12. In Homo sapiens (Human), this protein is Importin-11 (IPO11).